The primary structure comprises 377 residues: Flagellin D (377 aa).

2 coiled-coil regions span residues 103-129 (SNSKSERVAIQEEITALNDELNRIAET) and 310-339 (AFQNRFNHAISNLDNINENVNASKSRIKDT).

Belongs to the bacterial flagellin family. In terms of assembly, heteromer of multiple flagellin subunits including FlaA, FlaB, FlaC, FlaD and FlaE.

The protein localises to the secreted. It localises to the bacterial flagellum. In terms of biological role, flagellin is the subunit protein which polymerizes to form the filaments of bacterial flagella. FlaD is not essential for flagellar synthesis and motility. This is Flagellin D (flaD) from Vibrio cholerae serotype O1 (strain ATCC 39315 / El Tor Inaba N16961).